Here is a 215-residue protein sequence, read N- to C-terminus: Thiopurine S-methyltransferase (215 aa).

4 residues coordinate S-adenosyl-L-methionine: Trp-10, Leu-45, Glu-66, and Arg-123.

It belongs to the class I-like SAM-binding methyltransferase superfamily. TPMT family.

The protein resides in the cytoplasm. The catalysed reaction is S-adenosyl-L-methionine + a thiopurine = S-adenosyl-L-homocysteine + a thiopurine S-methylether.. In Pseudomonas putida (strain W619), this protein is Thiopurine S-methyltransferase.